The following is a 280-amino-acid chain: Polyamine aminopropyltransferase 1 (280 aa).

One can recognise a PABS domain in the interval 3–237; the sequence is DIVFIERDPY…YWWTFSIASK (235 aa). Glutamine 33 lines the S-methyl-5'-thioadenosine pocket. Residues histidine 64 and aspartate 88 each contribute to the spermidine site. S-methyl-5'-thioadenosine is bound by residues aspartate 108 and 139 to 140; that span reads DG. The active-site Proton acceptor is aspartate 157. 157–160 serves as a coordination point for spermidine; the sequence is DSTD.

The protein belongs to the spermidine/spermine synthase family. Homodimer or homotetramer.

It localises to the cytoplasm. It carries out the reaction S-adenosyl 3-(methylsulfanyl)propylamine + putrescine = S-methyl-5'-thioadenosine + spermidine + H(+). The protein operates within amine and polyamine biosynthesis; spermidine biosynthesis; spermidine from putrescine: step 1/1. In terms of biological role, catalyzes the irreversible transfer of a propylamine group from the amino donor S-adenosylmethioninamine (decarboxy-AdoMet) to putrescine (1,4-diaminobutane) to yield spermidine. This is Polyamine aminopropyltransferase 1 from Aquifex aeolicus (strain VF5).